Reading from the N-terminus, the 152-residue chain is Xanthine-guanine phosphoribosyltransferase (152 aa).

5-phospho-alpha-D-ribose 1-diphosphate contacts are provided by residues 37 to 38 (RG), Arg-69, and 88 to 96 (DDLVDTGGT). Arg-69 is a GMP binding site. Residue Asp-89 participates in Mg(2+) binding. Guanine is bound by residues Asp-92 and Ile-135. The xanthine site is built by Asp-92 and Ile-135. Residues 92-96 (DTGGT) and 134-135 (WI) each bind GMP.

The protein belongs to the purine/pyrimidine phosphoribosyltransferase family. XGPT subfamily. In terms of assembly, homotetramer. It depends on Mg(2+) as a cofactor.

It localises to the cell inner membrane. It carries out the reaction GMP + diphosphate = guanine + 5-phospho-alpha-D-ribose 1-diphosphate. It catalyses the reaction XMP + diphosphate = xanthine + 5-phospho-alpha-D-ribose 1-diphosphate. The enzyme catalyses IMP + diphosphate = hypoxanthine + 5-phospho-alpha-D-ribose 1-diphosphate. It participates in purine metabolism; GMP biosynthesis via salvage pathway; GMP from guanine: step 1/1. The protein operates within purine metabolism; XMP biosynthesis via salvage pathway; XMP from xanthine: step 1/1. Purine salvage pathway enzyme that catalyzes the transfer of the ribosyl-5-phosphate group from 5-phospho-alpha-D-ribose 1-diphosphate (PRPP) to the N9 position of the 6-oxopurines guanine and xanthine to form the corresponding ribonucleotides GMP (guanosine 5'-monophosphate) and XMP (xanthosine 5'-monophosphate), with the release of PPi. To a lesser extent, also acts on hypoxanthine. The polypeptide is Xanthine-guanine phosphoribosyltransferase (Pectobacterium carotovorum subsp. carotovorum (strain PC1)).